A 587-amino-acid polypeptide reads, in one-letter code: Putative gustatory receptor 59b (587 aa).

Residues 1–4 (MPSY) are Cytoplasmic-facing. A helical membrane pass occupies residues 5–25 (MAFTPYIMFSTNYAAIAYILI). Topologically, residues 26–62 (SRCYRDSMLLDLQRITLEVNREMLRTGKKMNSLIRRM) are extracellular. The helical transmembrane segment at 63-83 (FFLKTFTLTYSCLSYILAVLV) threads the bilayer. At 84–97 (YQWRAQNWSNLFNG) the chain is on the cytoplasmic side. Residues 98 to 118 (LLVNISLTILVVTTFFYFVSL) form a helical membrane-spanning segment. The Extracellular portion of the chain corresponds to 119–277 (MHVARGFDFV…CGLYPVNKAK (159 aa)). N159 carries N-linked (GlcNAc...) asparagine glycosylation. The chain crosses the membrane as a helical span at residues 278-298 (WLEMVASIVVHSIMLFQFHLV). Residues 299-309 (MRGGYTTLFSR) are Cytoplasmic-facing. Residues 310 to 330 (TYALLANIITLTMLPIVMWQV) traverse the membrane as a helical segment. The Extracellular segment spans residues 331–403 (RSVFLAKRHY…GIDGVRRSLR (73 aa)). A helical membrane pass occupies residues 404-424 (ILLFVKFFTLSWLCITDIIFL). Topologically, residues 425 to 518 (FYSSDAVIWV…IYAPQMLATR (94 aa)) are cytoplasmic. Residues 519-539 (FDHFVIGVIQAYWGAVFTFDL) form a helical membrane-spanning segment. Topologically, residues 540–587 (STSFLWVVYGSVQYHVRSLDYYLIDYMCDVAVEYHDSARHSWSEKECY) are extracellular.

The protein belongs to the insect chemoreceptor superfamily. Gustatory receptor (GR) family. Gr22e subfamily.

It localises to the cell membrane. Its function is as follows. Probable gustatory receptor which mediates acceptance or avoidance behavior, depending on its substrates. This chain is Putative gustatory receptor 59b, found in Drosophila erecta (Fruit fly).